The chain runs to 159 residues: Transcriptional repressor NrdR (159 aa).

Residues 3–34 fold into a zinc finger; it reads CPFCRHDDTQVVDSRVSEDGAAIRRRRRCSAC. Residues 49-139 form the ATP-cone domain; that stretch reads PAVVKKDGSR…VYRRFEDVSE (91 aa).

This sequence belongs to the NrdR family. The cofactor is Zn(2+).

Its function is as follows. Negatively regulates transcription of bacterial ribonucleotide reductase nrd genes and operons by binding to NrdR-boxes. The polypeptide is Transcriptional repressor NrdR (Burkholderia pseudomallei (strain 1106a)).